Reading from the N-terminus, the 38-residue chain is MIEPLVLGIVLGLIPITLAGLFVAAYLQYKRGNQFGLD.

Residues 5–25 (LVLGIVLGLIPITLAGLFVAA) traverse the membrane as a helical segment.

The protein belongs to the PetG family. In terms of assembly, the 4 large subunits of the cytochrome b6-f complex are cytochrome b6, subunit IV (17 kDa polypeptide, PetD), cytochrome f and the Rieske protein, while the 4 small subunits are PetG, PetL, PetM and PetN. The complex functions as a dimer.

The protein localises to the cellular thylakoid membrane. Component of the cytochrome b6-f complex, which mediates electron transfer between photosystem II (PSII) and photosystem I (PSI), cyclic electron flow around PSI, and state transitions. PetG is required for either the stability or assembly of the cytochrome b6-f complex. This Microcystis aeruginosa (strain NIES-843 / IAM M-2473) protein is Cytochrome b6-f complex subunit 5.